Here is a 262-residue protein sequence, read N- to C-terminus: Ornithine carbamoyltransferase (262 aa).

Residues S3–R7, Q30, R54, and H81–Q84 contribute to the carbamoyl phosphate site. L-ornithine is bound by residues N114, D178, and S182 to M183. Carbamoyl phosphate contacts are provided by residues H219–P222 and T247.

The protein belongs to the aspartate/ornithine carbamoyltransferase superfamily. OTCase family.

The protein resides in the cytoplasm. It catalyses the reaction carbamoyl phosphate + L-ornithine = L-citrulline + phosphate + H(+). It participates in amino-acid biosynthesis; L-arginine biosynthesis; L-arginine from L-ornithine and carbamoyl phosphate: step 1/3. Its function is as follows. Reversibly catalyzes the transfer of the carbamoyl group from carbamoyl phosphate (CP) to the N(epsilon) atom of ornithine (ORN) to produce L-citrulline. This is Ornithine carbamoyltransferase (argF) from Neisseria mucosa.